Reading from the N-terminus, the 315-residue chain is Ribosomal RNA small subunit methyltransferase H (315 aa).

Residues 37–39, Asp-57, Phe-83, Asp-105, and Gln-112 contribute to the S-adenosyl-L-methionine site; that span reads GGH.

Belongs to the methyltransferase superfamily. RsmH family.

The protein localises to the cytoplasm. The catalysed reaction is cytidine(1402) in 16S rRNA + S-adenosyl-L-methionine = N(4)-methylcytidine(1402) in 16S rRNA + S-adenosyl-L-homocysteine + H(+). Functionally, specifically methylates the N4 position of cytidine in position 1402 (C1402) of 16S rRNA. The sequence is that of Ribosomal RNA small subunit methyltransferase H from Pseudomonas putida (strain ATCC 700007 / DSM 6899 / JCM 31910 / BCRC 17059 / LMG 24140 / F1).